The primary structure comprises 818 residues: Lon protease (818 aa).

One can recognise a Lon N-terminal domain in the interval Leu-14 to Ile-216. Gly-370–Thr-377 is an ATP binding site. A Lon proteolytic domain is found at Glu-605–His-786. Catalysis depends on residues Ser-692 and Lys-735.

It belongs to the peptidase S16 family. In terms of assembly, homohexamer. Organized in a ring with a central cavity.

The protein resides in the cytoplasm. The catalysed reaction is Hydrolysis of proteins in presence of ATP.. In terms of biological role, ATP-dependent serine protease that mediates the selective degradation of mutant and abnormal proteins as well as certain short-lived regulatory proteins. Required for cellular homeostasis and for survival from DNA damage and developmental changes induced by stress. Degrades polypeptides processively to yield small peptide fragments that are 5 to 10 amino acids long. Binds to DNA in a double-stranded, site-specific manner. This Wolbachia pipientis subsp. Culex pipiens (strain wPip) protein is Lon protease.